The following is a 171-amino-acid chain: 3-hydroxydecanoyl-[acyl-carrier-protein] dehydratase (171 aa).

His-71 is a catalytic residue.

The protein belongs to the thioester dehydratase family. FabA subfamily. In terms of assembly, homodimer.

It is found in the cytoplasm. It catalyses the reaction a (3R)-hydroxyacyl-[ACP] = a (2E)-enoyl-[ACP] + H2O. The catalysed reaction is (3R)-hydroxydecanoyl-[ACP] = (2E)-decenoyl-[ACP] + H2O. It carries out the reaction (2E)-decenoyl-[ACP] = (3Z)-decenoyl-[ACP]. It participates in lipid metabolism; fatty acid biosynthesis. Functionally, necessary for the introduction of cis unsaturation into fatty acids. Catalyzes the dehydration of (3R)-3-hydroxydecanoyl-ACP to E-(2)-decenoyl-ACP and then its isomerization to Z-(3)-decenoyl-ACP. Can catalyze the dehydratase reaction for beta-hydroxyacyl-ACPs with saturated chain lengths up to 16:0, being most active on intermediate chain length. The chain is 3-hydroxydecanoyl-[acyl-carrier-protein] dehydratase from Rhizobium rhizogenes (strain K84 / ATCC BAA-868) (Agrobacterium radiobacter).